We begin with the raw amino-acid sequence, 637 residues long: Neuroendocrine convertase 2 (637 aa).

The N-terminal stretch at 1-24 is a signal peptide; the sequence is MEGGCGSQWKAAGLLFCVMVFASA. A propeptide spanning residues 25–108 is cleaved from the precursor; the sequence is ERPVFTNHFL…QQEGFDRKKR (84 aa). In terms of domain architecture, Peptidase S8 spans 128-452; that stretch reads QWYLFNTGQA…YGVLDAGAMV (325 aa). Active-site charge relay system residues include Asp-166 and His-207. 2 disulfide bridges follow: Cys-224–Cys-375 and Cys-316–Cys-346. Asn-374 carries N-linked (GlcNAc...) asparagine glycosylation. The Charge relay system role is filled by Ser-383. The P/Homo B domain occupies 460–596; it reads TVPERFHCVG…TLMLHGTQSA (137 aa). A disulfide bridge links Cys-467 with Cys-493. Residues Asn-513 and Asn-523 are each glycosylated (N-linked (GlcNAc...) asparagine).

It belongs to the peptidase S8 family. Furin subfamily.

Its subcellular location is the cytoplasmic vesicle. It is found in the secretory vesicle. The protein resides in the secreted. The catalysed reaction is Release of protein hormones and neuropeptides from their precursors, generally by hydrolysis of -Lys-Arg-|- bonds.. Functionally, serine endopeptidase which is involved in the processing of hormone and other protein precursors at sites comprised of pairs of basic amino acid residues. Responsible for the release of glucagon from proglucagon in pancreatic A cells. The polypeptide is Neuroendocrine convertase 2 (Pcsk2) (Rattus norvegicus (Rat)).